A 120-amino-acid chain; its full sequence is MASERSTDVQAFIGELDGGVFETKIGAVLSEVASGVMNTKTKGKVSLNLEIEPFDENRLKIKHKLSYVRPTNRGKISEEDTTETPMYVNRGGRLTILQEDQGQLLTLAGEPDGKLRAAGH.

This sequence to phage T4 y06Q.

This is an uncharacterized protein from Escherichia coli (strain K12).